A 306-amino-acid polypeptide reads, in one-letter code: Ribosomal RNA small subunit methyltransferase H (306 aa).

S-adenosyl-L-methionine-binding positions include 33 to 35 (GGY), D51, F78, D96, and Q103.

It belongs to the methyltransferase superfamily. RsmH family.

It is found in the cytoplasm. It catalyses the reaction cytidine(1402) in 16S rRNA + S-adenosyl-L-methionine = N(4)-methylcytidine(1402) in 16S rRNA + S-adenosyl-L-homocysteine + H(+). Its function is as follows. Specifically methylates the N4 position of cytidine in position 1402 (C1402) of 16S rRNA. This Rickettsia typhi (strain ATCC VR-144 / Wilmington) protein is Ribosomal RNA small subunit methyltransferase H.